The chain runs to 234 residues: uncharacterized protein (234 aa).

4 consecutive transmembrane segments (helical) span residues 28–48 (IVII…SIIS), 67–87 (FQIF…FDPI), 123–143 (GGVD…SGTI), and 154–174 (LYCI…GLLY).

It belongs to the complex I subunit 2 family.

The protein localises to the mitochondrion membrane. This is an uncharacterized protein from Neurospora crassa (strain ATCC 24698 / 74-OR23-1A / CBS 708.71 / DSM 1257 / FGSC 987).